A 384-amino-acid chain; its full sequence is MNNIRPKYYAFYNKISEGYYNPLYRKGLNKDTIYEIMVEDGFPTEKNVSFVSIENIFQQINFGSHIAEVFVPGYVKTSYNETTLKHYADMCIIGDIMNFYDINTIRYLIDNGANIKNCGNLLCQASQLGCIDIVKLLVKTSEKEFSGMDDLTRSNKLISTQEIFTDFKNNDHNVCILIAIVYKHIDVVKYFISIGEILSVKDDSLYFKLACDTGCLNIIKYLLEIGFDIESNNNYCLMISTINGRNDIVEYIKSRGVNPNNHVKKCIQIITNHNDDLKSSDIFLMTKFIKTTGVNSNILYQLLLIACEYGYYSMTMYLIKAGIKPTNSCLKIACKNNKFNIVKLITKYPKTRLDINVDNNYCMKQAIFHKNKDMVDYLTNFKYV.

ANK repeat units lie at residues 88-117 (ADMC…NIKN), 119-146 (GNLL…KEFS), 171-200 (DHNV…ILSV), 202-231 (DDSL…DIES), 233-261 (NNYC…NPNN), 298-324 (ILYQ…AGIK), and 325-357 (PTNS…DINV).

In Acanthamoeba polyphaga (Amoeba), this protein is Putative ankyrin repeat protein L72.